Consider the following 248-residue polypeptide: Glutaredoxin domain-containing cysteine-rich protein 2 (248 aa).

2 stretches are compositionally biased toward basic and acidic residues: residues 1–16 (MEDP…DGKP) and 157–172 (LMNK…QHDR). Disordered regions lie at residues 1 to 20 (MEDP…RKVR) and 150 to 172 (EEAE…QHDR).

It belongs to the GRXCR2 family. Interacts with TPRN; the interaction restricts TPRN to the stereocilum basal region.

The protein localises to the cell projection. Its subcellular location is the stereocilium. Its function is as follows. Required for hearing. Plays a role in maintaining cochlear stereocilia bundles that are involved in sound detection. Ensures the restriction of TPRN to the basal region of stereocilia in hair cells. This chain is Glutaredoxin domain-containing cysteine-rich protein 2 (GRXCR2), found in Homo sapiens (Human).